Reading from the N-terminus, the 666-residue chain is Probable potassium transport system protein Kup (666 aa).

Helical transmembrane passes span 53–73 (FWAL…TSPL), 89–109 (VTPV…FIVV), 144–164 (LLLL…SMIT), 181–201 (PEFG…LFAV), 212–232 (AFAP…ALHI), 247–267 (AIHF…LVFL), 291–311 (WFCL…ALIL), 324–344 (LAPA…TVIA), 381–401 (IYLP…VLLF), 411–431 (YGIA…VVVW), 441–461 (AAAL…ANLL), and 463–483 (LLDG…LIWT).

This sequence belongs to the HAK/KUP transporter (TC 2.A.72) family.

Its subcellular location is the cell inner membrane. It catalyses the reaction K(+)(in) + H(+)(in) = K(+)(out) + H(+)(out). Transport of potassium into the cell. Likely operates as a K(+):H(+) symporter. This is Probable potassium transport system protein Kup from Nitrobacter hamburgensis (strain DSM 10229 / NCIMB 13809 / X14).